The sequence spans 322 residues: NADH oxidoreductase HCR (322 aa).

Residues glutamine 7–aspartate 107 enclose the FAD-binding FR-type domain. An oxidoreductase region spans residues glutamate 111–glutamate 213. Residues serine 237–alanine 322 enclose the 2Fe-2S ferredoxin-type domain. Residues cysteine 273, cysteine 278, cysteine 281, and cysteine 311 each contribute to the [2Fe-2S] cluster site.

In the N-terminal section; belongs to the FAD-binding oxidoreductase type 6 family. [2Fe-2S] cluster is required as a cofactor. It depends on FAD as a cofactor.

NADH oxidoreductase acting in concert with HCP. The sequence is that of NADH oxidoreductase HCR (hcr) from Escherichia coli (strain K12).